Consider the following 644-residue polypeptide: G-protein coupled receptor-associated protein LMBRD2 (644 aa).

The Extracellular segment spans residues 1–4; sequence MGTV. Residues 5-27 traverse the membrane as a helical segment; sequence SLAVQLFIVFLLTSYLLNKYSTI. Residues 28 to 31 are Cytoplasmic-facing; sequence RKQN. A helical transmembrane segment spans residues 32–52; that stretch reads PIVTISTFIGWYFSLIIVFVL. At 53–102 the chain is on the extracellular side; it reads PLDVAITFFHKCENDRQRVLNTTSTPAPIVPECELPGGYVPDDVLFDLWR. Asparagine 73 carries an N-linked (GlcNAc...) asparagine glycan. A helical transmembrane segment spans residues 103 to 123; that stretch reads VVYWSAQILTWLILPLLQSYV. Residues 124-145 lie on the Cytoplasmic side of the membrane; it reads TAGNFTIFGKIRAAVINNTVYY. The helical transmembrane segment at 146–166 threads the bilayer; that stretch reads AIYSLCFLAILIYAMFKGVSI. Topologically, residues 167 to 172 are extracellular; it reads NIENLK. The chain crosses the membrane as a helical span at residues 173 to 193; the sequence is VILVSASNTWGLFLLVVLLGH. Residues 194 to 369 lie on the Cytoplasmic side of the membrane; that stretch reads GLVELPRSLW…RLQTPFCRVL (176 aa). Residues 216–245 adopt a coiled-coil conformation; that stretch reads YFDIEKLASEKSEAEENVKEIYKKVRVLFN. Residues 370–390 form a helical membrane-spanning segment; sequence GVVTVFMTFFVLFSECTFFVV. Topologically, residues 391 to 412 are extracellular; it reads SYTVSPAAFVTEYASNRFHYKY. The helical transmembrane segment at 413 to 433 threads the bilayer; the sequence is TQFVAFGIIVYLITCAYFTIF. The Cytoplasmic segment spans residues 434–453; that stretch reads RLQIYKYYHLDPNGHTDENS. Residues 454–474 form a helical membrane-spanning segment; that stretch reads ILFSAILLCRLTPPICLNFLG. The Extracellular segment spans residues 475-502; it reads MIHMDSHVSMAKSFGVETQFTKLMGHLD. The chain crosses the membrane as a helical span at residues 503 to 523; the sequence is VIPILAKGINIYLPICIILLC. The Cytoplasmic portion of the chain corresponds to 524–644; the sequence is AIHYYRVGAY…PSSSGFFDDM (121 aa). Residues 567–576 show a composition bias toward basic and acidic residues; that stretch reads SIKRSNERNQ. The segment at 567–644 is disordered; it reads SIKRSNERNQ…PSSSGFFDDM (78 aa). Residues 578–594 are compositionally biased toward low complexity; sequence NQSWTNTITSNTSTTSN. Positions 621 to 644 are enriched in polar residues; that stretch reads VSSTTRISLSPTEHPSSSGFFDDM.

Belongs to the LIMR family.

It is found in the cell membrane. Its function is as follows. May associate with G-protein coupled receptors and regulate downstream signaling pathways. The polypeptide is G-protein coupled receptor-associated protein LMBRD2 (Caenorhabditis briggsae).